The primary structure comprises 394 residues: Chorismate synthase (394 aa).

Residues arginine 40 and arginine 46 each coordinate NADP(+). FMN is bound by residues arginine 135–serine 137, glutamine 255–alanine 256, glycine 302, lysine 317–serine 321, and arginine 343.

Belongs to the chorismate synthase family. Homotetramer. FMNH2 serves as cofactor.

The enzyme catalyses 5-O-(1-carboxyvinyl)-3-phosphoshikimate = chorismate + phosphate. The protein operates within metabolic intermediate biosynthesis; chorismate biosynthesis; chorismate from D-erythrose 4-phosphate and phosphoenolpyruvate: step 7/7. Functionally, catalyzes the anti-1,4-elimination of the C-3 phosphate and the C-6 proR hydrogen from 5-enolpyruvylshikimate-3-phosphate (EPSP) to yield chorismate, which is the branch point compound that serves as the starting substrate for the three terminal pathways of aromatic amino acid biosynthesis. This reaction introduces a second double bond into the aromatic ring system. The polypeptide is Chorismate synthase (Parafrankia sp. (strain EAN1pec)).